We begin with the raw amino-acid sequence, 494 residues long: Glycerol kinase 1 (494 aa).

Residue threonine 12 participates in ADP binding. ATP-binding residues include threonine 12, threonine 13, and serine 14. Position 12 (threonine 12) interacts with sn-glycerol 3-phosphate. Position 16 (arginine 16) interacts with ADP. Arginine 82, glutamate 83, tyrosine 134, and aspartate 243 together coordinate sn-glycerol 3-phosphate. 5 residues coordinate glycerol: arginine 82, glutamate 83, tyrosine 134, aspartate 243, and glutamine 244. Residues threonine 265 and glycine 308 each coordinate ADP. ATP contacts are provided by threonine 265, glycine 308, glutamine 312, and glycine 408. Residues glycine 408 and asparagine 412 each coordinate ADP.

Belongs to the FGGY kinase family.

It carries out the reaction glycerol + ATP = sn-glycerol 3-phosphate + ADP + H(+). Its pathway is polyol metabolism; glycerol degradation via glycerol kinase pathway; sn-glycerol 3-phosphate from glycerol: step 1/1. With respect to regulation, inhibited by fructose 1,6-bisphosphate (FBP). Its function is as follows. Key enzyme in the regulation of glycerol uptake and metabolism. Catalyzes the phosphorylation of glycerol to yield sn-glycerol 3-phosphate. This Pseudomonas aeruginosa (strain ATCC 15692 / DSM 22644 / CIP 104116 / JCM 14847 / LMG 12228 / 1C / PRS 101 / PAO1) protein is Glycerol kinase 1.